Here is a 386-residue protein sequence, read N- to C-terminus: Chaperone protein DnaJ (386 aa).

Residues 6–71 (DYYEILGVDR…QKRARYDQFG (66 aa)) enclose the J domain. The segment at 144-226 (GTEKEVTVSR…CGGKGRVRKH (83 aa)) adopts a CR-type zinc-finger fold. 8 residues coordinate Zn(2+): Cys-157, Cys-160, Cys-174, Cys-177, Cys-200, Cys-203, Cys-214, and Cys-217. CXXCXGXG motif repeat units lie at residues 157–164 (CPTCSGSG), 174–181 (CRQCNGTG), 200–207 (CDVCHGEG), and 214–221 (CETCGGKG).

This sequence belongs to the DnaJ family. Homodimer. Zn(2+) is required as a cofactor.

It localises to the cytoplasm. Functionally, participates actively in the response to hyperosmotic and heat shock by preventing the aggregation of stress-denatured proteins and by disaggregating proteins, also in an autonomous, DnaK-independent fashion. Unfolded proteins bind initially to DnaJ; upon interaction with the DnaJ-bound protein, DnaK hydrolyzes its bound ATP, resulting in the formation of a stable complex. GrpE releases ADP from DnaK; ATP binding to DnaK triggers the release of the substrate protein, thus completing the reaction cycle. Several rounds of ATP-dependent interactions between DnaJ, DnaK and GrpE are required for fully efficient folding. Also involved, together with DnaK and GrpE, in the DNA replication of plasmids through activation of initiation proteins. This is Chaperone protein DnaJ from Acetivibrio thermocellus (strain ATCC 27405 / DSM 1237 / JCM 9322 / NBRC 103400 / NCIMB 10682 / NRRL B-4536 / VPI 7372) (Clostridium thermocellum).